A 103-amino-acid chain; its full sequence is Small ribosomal subunit protein uS10 (103 aa).

Belongs to the universal ribosomal protein uS10 family. As to quaternary structure, part of the 30S ribosomal subunit.

In terms of biological role, involved in the binding of tRNA to the ribosomes. This Methylibium petroleiphilum (strain ATCC BAA-1232 / LMG 22953 / PM1) protein is Small ribosomal subunit protein uS10.